Reading from the N-terminus, the 723-residue chain is Nuclear hormone receptor HR96 (723 aa).

The nuclear receptor DNA-binding region spans 4–79 (PKNCAVCGDK…IGMKSENIMS (76 aa)). NR C4-type zinc fingers lie at residues 7 to 27 (CAVC…CESC) and 43 to 67 (CPFN…LRKC). Positions 95 to 163 (AKRRLMENGT…QASSPGTQVN (69 aa)) are disordered. 2 stretches are compositionally biased toward polar residues: residues 122–142 (DSSS…SCGS) and 151–163 (SGRQ…TQVN). Residues 483–723 (EQMKLRELRL…LREIFDLKNH (241 aa)) enclose the NR LBD domain.

The protein belongs to the nuclear hormone receptor family. NR1 subfamily.

The protein resides in the nucleus. Functionally, binds selectively to the HSP27 20E response element. The polypeptide is Nuclear hormone receptor HR96 (Hr96) (Drosophila melanogaster (Fruit fly)).